A 96-amino-acid chain; its full sequence is Co-chaperonin GroES (96 aa).

The protein belongs to the GroES chaperonin family. As to quaternary structure, heptamer of 7 subunits arranged in a ring. Interacts with the chaperonin GroEL.

Its subcellular location is the cytoplasm. Functionally, together with the chaperonin GroEL, plays an essential role in assisting protein folding. The GroEL-GroES system forms a nano-cage that allows encapsulation of the non-native substrate proteins and provides a physical environment optimized to promote and accelerate protein folding. GroES binds to the apical surface of the GroEL ring, thereby capping the opening of the GroEL channel. The chain is Co-chaperonin GroES from Polaromonas naphthalenivorans (strain CJ2).